The primary structure comprises 203 residues: Guanylate kinase (203 aa).

The Guanylate kinase-like domain occupies 5–184 (GMLIVLSGPS…AVQRIEKIIE (180 aa)). 12-19 (GPSGVGKG) is a binding site for ATP.

Belongs to the guanylate kinase family.

It localises to the cytoplasm. It catalyses the reaction GMP + ATP = GDP + ADP. Functionally, essential for recycling GMP and indirectly, cGMP. In Latilactobacillus sakei subsp. sakei (strain 23K) (Lactobacillus sakei subsp. sakei), this protein is Guanylate kinase.